We begin with the raw amino-acid sequence, 604 residues long: MTDAPVSRLRNFCIIAHIDHGKSTLADRLLQDTGTVADRDMQAQFLDNMDLERERGITIKLQAARMQFKAADGELYTLNLIDTPGHVDFSYEVSRSLQACEGALLVVDASQGVEAQTLANVYLALGNDLEIIPVLNKIDLPGADAERISTEIEEIIGLDTSNAIHCSAKTGLGVPEILQAIVDRVPAPPDTTEEPLKALIFDSYYDPYRGVIVYFRVVSGRLRKKDKVLLMASKKTYELDEIGVMSPDQKQVDELHAGEVGYLAASIKAVADARVGDTITLASAPAEEPLPGYTEAKPMVFCGLFPTDADQYPDLRDALDKLKLSDAALKYEPETSSAMGFGFRCGFLGLLHMEIVQERLEREYDLDLIVTAPSVIYKVNMADGSTVMVDNPATLPEPQARESIEEPYVKMEIYAPNSFNGTLMELCQERRGTFIDMKYITTDRVTLQYELPLAEVVTDFFDQMKSRTKGYASMEYSLIGYRQNVLVRLDVLINGDKADPLTTIVHRDKAYGVGKGLVEKLKELIPRQQFKIPLQASIGSRIIASESISAMRKDVLAKCYGGDISRKKKLLKKQAKGKKRMKAMGKVDVPQEAFMAVLKLNENK.

The region spanning 7–190 (SRLRNFCIIA…IVDRVPAPPD (184 aa)) is the tr-type G domain. GTP is bound by residues 19-24 (DHGKST) and 136-139 (NKID).

It belongs to the TRAFAC class translation factor GTPase superfamily. Classic translation factor GTPase family. LepA subfamily.

The protein localises to the cell inner membrane. The catalysed reaction is GTP + H2O = GDP + phosphate + H(+). In terms of biological role, required for accurate and efficient protein synthesis under certain stress conditions. May act as a fidelity factor of the translation reaction, by catalyzing a one-codon backward translocation of tRNAs on improperly translocated ribosomes. Back-translocation proceeds from a post-translocation (POST) complex to a pre-translocation (PRE) complex, thus giving elongation factor G a second chance to translocate the tRNAs correctly. Binds to ribosomes in a GTP-dependent manner. The sequence is that of Elongation factor 4 from Synechococcus sp. (strain RCC307).